The chain runs to 247 residues: Small ribosomal subunit protein uS3 (247 aa).

In terms of domain architecture, KH type-2 spans Ile38–Lys106. Basic and acidic residues predominate over residues Ser214–Gly226. The disordered stretch occupies residues Ser214–Gly247. The span at Arg227–Arg238 shows a compositional bias: basic residues.

Belongs to the universal ribosomal protein uS3 family. As to quaternary structure, part of the 30S ribosomal subunit. Forms a tight complex with proteins S10 and S14.

Binds the lower part of the 30S subunit head. Binds mRNA in the 70S ribosome, positioning it for translation. The sequence is that of Small ribosomal subunit protein uS3 from Corynebacterium jeikeium (strain K411).